The chain runs to 423 residues: Serine--tRNA ligase (423 aa).

231 to 233 (TAE) contributes to the L-serine binding site. 262-264 (RSE) contributes to the ATP binding site. Residue Glu-285 participates in L-serine binding. Residue 349–352 (EISS) coordinates ATP. Ser-384 is an L-serine binding site.

Belongs to the class-II aminoacyl-tRNA synthetase family. Type-1 seryl-tRNA synthetase subfamily. In terms of assembly, homodimer. The tRNA molecule binds across the dimer.

It localises to the cytoplasm. It catalyses the reaction tRNA(Ser) + L-serine + ATP = L-seryl-tRNA(Ser) + AMP + diphosphate + H(+). It carries out the reaction tRNA(Sec) + L-serine + ATP = L-seryl-tRNA(Sec) + AMP + diphosphate + H(+). The protein operates within aminoacyl-tRNA biosynthesis; selenocysteinyl-tRNA(Sec) biosynthesis; L-seryl-tRNA(Sec) from L-serine and tRNA(Sec): step 1/1. In terms of biological role, catalyzes the attachment of serine to tRNA(Ser). Is also able to aminoacylate tRNA(Sec) with serine, to form the misacylated tRNA L-seryl-tRNA(Sec), which will be further converted into selenocysteinyl-tRNA(Sec). This chain is Serine--tRNA ligase, found in Acinetobacter baumannii (strain AB307-0294).